Reading from the N-terminus, the 203-residue chain is NADH-quinone oxidoreductase subunit C (203 aa).

The protein belongs to the complex I 30 kDa subunit family. NDH-1 is composed of 14 different subunits. Subunits NuoB, C, D, E, F, and G constitute the peripheral sector of the complex.

It localises to the cell inner membrane. It carries out the reaction a quinone + NADH + 5 H(+)(in) = a quinol + NAD(+) + 4 H(+)(out). In terms of biological role, NDH-1 shuttles electrons from NADH, via FMN and iron-sulfur (Fe-S) centers, to quinones in the respiratory chain. The immediate electron acceptor for the enzyme in this species is believed to be ubiquinone. Couples the redox reaction to proton translocation (for every two electrons transferred, four hydrogen ions are translocated across the cytoplasmic membrane), and thus conserves the redox energy in a proton gradient. The polypeptide is NADH-quinone oxidoreductase subunit C (Methylibium petroleiphilum (strain ATCC BAA-1232 / LMG 22953 / PM1)).